We begin with the raw amino-acid sequence, 900 residues long: DNA mismatch repair protein MutS (900 aa).

637–644 (GPNMAGKS) contributes to the ATP binding site.

The protein belongs to the DNA mismatch repair MutS family.

Functionally, this protein is involved in the repair of mismatches in DNA. It is possible that it carries out the mismatch recognition step. This protein has a weak ATPase activity. The polypeptide is DNA mismatch repair protein MutS (Methanosarcina mazei (strain ATCC BAA-159 / DSM 3647 / Goe1 / Go1 / JCM 11833 / OCM 88) (Methanosarcina frisia)).